The following is a 164-amino-acid chain: Large ribosomal subunit protein uL10 (164 aa).

This sequence belongs to the universal ribosomal protein uL10 family. In terms of assembly, part of the ribosomal stalk of the 50S ribosomal subunit. The N-terminus interacts with L11 and the large rRNA to form the base of the stalk. The C-terminus forms an elongated spine to which L12 dimers bind in a sequential fashion forming a multimeric L10(L12)X complex.

Functionally, forms part of the ribosomal stalk, playing a central role in the interaction of the ribosome with GTP-bound translation factors. The sequence is that of Large ribosomal subunit protein uL10 from Pseudoalteromonas translucida (strain TAC 125).